We begin with the raw amino-acid sequence, 249 residues long: Early E1A protein (249 aa).

Residues 38–46 (MSLHDLFDV) are interaction with RB1 in competition with E2F1. The segment at 74–131 (SAAESGSGDSGVGEELLPVDLDLKCYEDGLPPSDPETDEATEAEEEAAMPTYVNENEN) is interaction with UBE2I. The LXCXE motif, interaction with host RB1 and TMEM173/STING motif lies at 96-100 (LKCYE). A zinc finger spans residues 145–165 (CRACDFHRGTSGNPEAMCALC). Residues 180–203 (DAEGESESGSPEDTDFPHPLTATP) are disordered. Residues 181 to 193 (AEGESESGSPEDT) show a composition bias toward acidic residues. The PXDLS motif, CTBP-binding motif lies at 238–242 (PLNLS). Residues 244-248 (KRPKC) carry the Nuclear localization signal motif.

Belongs to the adenoviridae E1A protein family. Interacts with host UBE2I; this interaction interferes with polySUMOylation. Interacts with host RB1; this interaction induces the aberrant dissociation of RB1-E2F1 complex thereby disrupting the activity of RB1 and activating E2F1-regulated genes. Interacts with host ATF7; the interaction enhances ATF7-mediated viral transactivation activity which requires the zinc binding domains of both proteins. Isoform early E1A 32 kDa protein and isoform early E1A 26 kDa protein interact (via N-terminus) with CUL1 and E3 ubiquitin ligase RBX1; these interactions inhibit RBX1-CUL1-dependent elongation reaction of ubiquitin chains and attenuate ubiquitination of SCF(FBXW7) target proteins. Interacts (via PXLXP motif) with host ZMYND11/BS69 (via MYND-type zinc finger); this interaction inhibits E1A mediated transactivation. Interacts with host EP300; this interaction stimulates the acetylation of RB1 by recruiting EP300 and RB1 into a multimeric-protein complex. Interacts with host CTBP1 and CTBP2; this interaction seems to potentiate viral replication. Interacts with host DCAF7. Interacts with host DYRK1A. Interacts with host KPNA4; this interaction allows E1A import into the host nucleus. Interacts with host EP400; this interaction stabilizes MYC. Interacts with host TBP protein; this interaction probably disrupts the TBP-TATA complex. Interacts (via LXCXE motif) with host TMEM173/STING; this interaction impairs the ability of TMEM173/STING to sense cytosolic DNA and promote the production of type I interferon (IFN-alpha and IFN-beta). Interacts (via C-terminus) with host ZBED1/hDREF (via C-terminus); the interaction is direct.

The protein localises to the host nucleus. Its function is as follows. Plays a role in viral genome replication by driving entry of quiescent cells into the cell cycle. Stimulation of progression from G1 to S phase allows the virus to efficiently use the cellular DNA replicating machinery to achieve viral genome replication. E1A protein has both transforming and trans-activating activities. Induces the disassembly of the E2F1 transcription factor from RB1 by direct competition for the same binding site on RB1, with subsequent transcriptional activation of E2F1-regulated S-phase genes and of the E2 region of the adenoviral genome. Release of E2F1 leads to the ARF-mediated inhibition of MDM2 and causes TP53/p53 to accumulate because it is not targeted for degradation by MDM2-mediated ubiquitination anymore. This increase in TP53, in turn, would arrest the cell proliferation and direct its death but this effect is counteracted by the viral protein E1B-55K. Inactivation of the ability of RB1 to arrest the cell cycle is critical for cellular transformation, uncontrolled cellular growth and proliferation induced by viral infection. Interaction with RBX1 and CUL1 inhibits ubiquitination of the proteins targeted by SCF(FBXW7) ubiquitin ligase complex, and may be linked to unregulated host cell proliferation. The tumorigenesis-restraining activity of E1A may be related to the disruption of the host CtBP-CtIP complex through the CtBP binding motif. Interaction with host TMEM173/STING impairs the ability of TMEM173/STING to sense cytosolic DNA and promote the production of type I interferon (IFN-alpha and IFN-beta). Promotes the sumoylation of host ZBED1/hDREF with SUMO1. The protein is Early E1A protein of Homo sapiens (Human).